A 283-amino-acid polypeptide reads, in one-letter code: Diaminopimelate epimerase (283 aa).

Residues asparagine 13, glutamine 46, and asparagine 66 each coordinate substrate. Cysteine 75 serves as the catalytic Proton donor. Substrate contacts are provided by residues 76-77, asparagine 166, asparagine 199, and 217-218; these read GN and ER. Cysteine 226 serves as the catalytic Proton acceptor. Substrate is bound at residue 227 to 228; sequence GT.

This sequence belongs to the diaminopimelate epimerase family. Homodimer.

The protein resides in the cytoplasm. The catalysed reaction is (2S,6S)-2,6-diaminopimelate = meso-2,6-diaminopimelate. It functions in the pathway amino-acid biosynthesis; L-lysine biosynthesis via DAP pathway; DL-2,6-diaminopimelate from LL-2,6-diaminopimelate: step 1/1. Functionally, catalyzes the stereoinversion of LL-2,6-diaminopimelate (L,L-DAP) to meso-diaminopimelate (meso-DAP), a precursor of L-lysine and an essential component of the bacterial peptidoglycan. This chain is Diaminopimelate epimerase, found in Herminiimonas arsenicoxydans.